The following is a 408-amino-acid chain: NADH-quinone oxidoreductase subunit D (408 aa).

The protein belongs to the complex I 49 kDa subunit family. In terms of assembly, NDH-1 is composed of 14 different subunits. Subunits NuoB, C, D, E, F, and G constitute the peripheral sector of the complex.

The protein resides in the cell inner membrane. The catalysed reaction is a quinone + NADH + 5 H(+)(in) = a quinol + NAD(+) + 4 H(+)(out). In terms of biological role, NDH-1 shuttles electrons from NADH, via FMN and iron-sulfur (Fe-S) centers, to quinones in the respiratory chain. The immediate electron acceptor for the enzyme in this species is believed to be ubiquinone. Couples the redox reaction to proton translocation (for every two electrons transferred, four hydrogen ions are translocated across the cytoplasmic membrane), and thus conserves the redox energy in a proton gradient. This is NADH-quinone oxidoreductase subunit D from Campylobacter jejuni subsp. jejuni serotype O:2 (strain ATCC 700819 / NCTC 11168).